The chain runs to 100 residues: Small ribosomal subunit protein uS14c (100 aa).

This sequence belongs to the universal ribosomal protein uS14 family. Part of the 30S ribosomal subunit.

It localises to the plastid. It is found in the chloroplast. Its function is as follows. Binds 16S rRNA, required for the assembly of 30S particles. The sequence is that of Small ribosomal subunit protein uS14c from Oenothera argillicola (Appalachian evening primrose).